A 393-amino-acid polypeptide reads, in one-letter code: Putative acid--amine ligase HI_0929 (393 aa).

103–105 contributes to the ATP binding site; it reads RFD. Residues D105, E117, and N119 each coordinate Mg(2+). Residues K267, K303, G310, Q343, and 378–380 each bind ATP; that span reads AVT.

It belongs to the glutathionylspermidine synthase preATP-grasp family.

Functionally, may be a ligase forming an amide bond. Shows ATPase activity. The sequence is that of Putative acid--amine ligase HI_0929 from Haemophilus influenzae (strain ATCC 51907 / DSM 11121 / KW20 / Rd).